The primary structure comprises 402 residues: uncharacterized protein (402 aa).

Residues 1–11 (MTPSNYQRTRW) are Cytoplasmic-facing. Residues 12 to 34 (LTLIGTIITQFALGSVYTWSLFN) form a helical membrane-spanning segment. Residues 35-43 (GALSAKLDA) lie on the Periplasmic side of the membrane. The chain crosses the membrane as a helical span at residues 44-66 (PVSQVAFSFGLLSLGLAISSSVA). Topologically, residues 67–72 (GKLQER) are cytoplasmic. A helical transmembrane segment spans residues 73–95 (FGVKRVTMASGILLGLGFFLTAH). Over 96–99 (SDNL) the chain is Periplasmic. The helical transmembrane segment at 100–122 (MMLWLSAGVLVGLADGAGYLLTL) threads the bilayer. Topologically, residues 123 to 134 (SNCVKWFPERKG) are cytoplasmic. A helical transmembrane segment spans residues 135–154 (LISAFAIGSYGLGSLGFKFI). Over 155-168 (DTQLLETVGLEKTF) the chain is Periplasmic. A helical transmembrane segment spans residues 169–186 (VIWGAIALLMIVFGATLM). At 187-216 (KDAPKQEVKTSNGVVEKDYTLAESMRKPQY) the chain is on the cytoplasmic side. The helical transmembrane segment at 217–236 (WMLAVMFLTACMSGLYVIGV) threads the bilayer. Residues 237-250 (AKDIAQSLAHLDVV) lie on the Periplasmic side of the membrane. The helical transmembrane segment at 251–273 (SAANAVTVISIANLSGRLVLGIL) threads the bilayer. Over 274–279 (SDKIAR) the chain is Cytoplasmic. A helical transmembrane segment spans residues 280-302 (IRVITIGQVISLVGMAALLFAPL). Topologically, residues 303-306 (NAVT) are periplasmic. The helical transmembrane segment at 307–329 (FFAAIACVAFNFGGTITVFPSLV) threads the bilayer. The Cytoplasmic segment spans residues 330–341 (SEFFGLNNLAKN). Residues 342–364 (YGVIYLGFGIGSICGSIIASLFG) traverse the membrane as a helical segment. The Periplasmic portion of the chain corresponds to 365 to 367 (GFY). Residues 368 to 387 (VTFYVIFALLILSLALSTTI) traverse the membrane as a helical segment. Over 388–402 (RQPEQKMLREAHGSL) the chain is Cytoplasmic.

The protein belongs to the major facilitator superfamily. As to quaternary structure, interacts with BtsS and YpdA.

It is found in the cell inner membrane. Its function is as follows. Part of a nutrient-sensing regulatory network composed of the two-component regulatory systems BtsS/BtsR and YpdA/YpdB, and their respective target proteins, BtsT and YhjX. This is an uncharacterized protein from Escherichia coli (strain K12).